Here is a 396-residue protein sequence, read N- to C-terminus: Phosphoglycerate kinase (396 aa).

Substrate contacts are provided by residues 21–23 (DFN), arginine 36, 59–62 (HLGR), arginine 119, and arginine 156. Residues lysine 207, glutamate 325, and 352–355 (GGDS) contribute to the ATP site.

The protein belongs to the phosphoglycerate kinase family. In terms of assembly, monomer.

The protein localises to the cytoplasm. It carries out the reaction (2R)-3-phosphoglycerate + ATP = (2R)-3-phospho-glyceroyl phosphate + ADP. Its pathway is carbohydrate degradation; glycolysis; pyruvate from D-glyceraldehyde 3-phosphate: step 2/5. The polypeptide is Phosphoglycerate kinase (Lacticaseibacillus casei (strain BL23) (Lactobacillus casei)).